The following is a 459-amino-acid chain: Cysteine--tRNA ligase (459 aa).

A Zn(2+)-binding site is contributed by Cys-31. Positions 33 to 43 (PTVYYNPHIGN) match the 'HIGH' region motif. Zn(2+) is bound by residues Cys-216, His-241, and Glu-245. Residues 274 to 278 (KMSKS) carry the 'KMSKS' region motif. Position 277 (Lys-277) interacts with ATP.

This sequence belongs to the class-I aminoacyl-tRNA synthetase family. As to quaternary structure, monomer. Zn(2+) serves as cofactor.

The protein resides in the cytoplasm. It catalyses the reaction tRNA(Cys) + L-cysteine + ATP = L-cysteinyl-tRNA(Cys) + AMP + diphosphate. In Rickettsia peacockii (strain Rustic), this protein is Cysteine--tRNA ligase.